The primary structure comprises 250 residues: uncharacterized protein (250 aa).

This sequence belongs to the glycosyltransferase 2 family.

This is an uncharacterized protein from Haemophilus influenzae (strain ATCC 51907 / DSM 11121 / KW20 / Rd).